A 174-amino-acid polypeptide reads, in one-letter code: MAQDIKNEEVEEVQEEEVVETAEETTPEKSELDLANERADEFENKYLRAHAEMQNIQRRANEERQNLQRYRSQDLAKAILPSLDNLERALAVEGLTDDVKKGLGMVQESLIHALKEEGIEEIAADGEFDHNYHMAIQTLPADDEHPVDTIAQVFQKGYKLHDRILRPAMVVVYN.

Residues 1 to 35 (MAQDIKNEEVEEVQEEEVVETAEETTPEKSELDLA) form a disordered region. Residues 9–25 (EVEEVQEEEVVETAEET) show a composition bias toward acidic residues. Residues 26-35 (TPEKSELDLA) are compositionally biased toward basic and acidic residues.

The protein belongs to the GrpE family. Homodimer.

Its subcellular location is the cytoplasm. Participates actively in the response to hyperosmotic and heat shock by preventing the aggregation of stress-denatured proteins, in association with DnaK and GrpE. It is the nucleotide exchange factor for DnaK and may function as a thermosensor. Unfolded proteins bind initially to DnaJ; upon interaction with the DnaJ-bound protein, DnaK hydrolyzes its bound ATP, resulting in the formation of a stable complex. GrpE releases ADP from DnaK; ATP binding to DnaK triggers the release of the substrate protein, thus completing the reaction cycle. Several rounds of ATP-dependent interactions between DnaJ, DnaK and GrpE are required for fully efficient folding. The chain is Protein GrpE from Streptococcus pneumoniae (strain ATCC 700669 / Spain 23F-1).